A 586-amino-acid chain; its full sequence is Phosphatidylinositol-3-phosphatase SAC1-A (586 aa).

Residues 1 to 519 (MANAYERFNL…TPLHVKKDWK (519 aa)) lie on the Cytoplasmic side of the membrane. The SAC domain maps to 121–450 (INNVLNTDGF…ANACAKQYAG (330 aa)). Residues 451–586 (TGALKTDFTR…PKLVQKEKMD (136 aa)) are essential for phosphatidylinositol-4-phosphate phosphatase activity. The helical transmembrane segment at 520–540 (FLLLPVIMVVAFSMCIICLLM) threads the bilayer. The Lumenal segment spans residues 541–547 (AGDTWTE). Residues 548–568 (TLAYVLFWGMASALTAAVIVV) form a helical membrane-spanning segment. Residues 569–586 (NGREFVDAPKLVQKEKMD) are Cytoplasmic-facing.

It is found in the endoplasmic reticulum membrane. The protein resides in the golgi apparatus membrane. The catalysed reaction is a 1,2-diacyl-sn-glycero-3-phospho-(1D-myo-inositol-3-phosphate) + H2O = a 1,2-diacyl-sn-glycero-3-phospho-(1D-myo-inositol) + phosphate. It carries out the reaction a 1,2-diacyl-sn-glycero-3-phospho-(1D-myo-inositol 4-phosphate) + H2O = a 1,2-diacyl-sn-glycero-3-phospho-(1D-myo-inositol) + phosphate. Its function is as follows. Phosphoinositide phosphatase which catalyzes the hydrolysis of phosphatidylinositol 4-phosphate (PtdIns(4)P), phosphatidylinositol 3-phosphate (PtdIns(3)P) and has low activity towards phosphatidylinositol-3,5-bisphosphate (PtdIns(3,5)P2). In Danio rerio (Zebrafish), this protein is Phosphatidylinositol-3-phosphatase SAC1-A (sacm1la).